A 264-amino-acid polypeptide reads, in one-letter code: 3-methyl-2-oxobutanoate hydroxymethyltransferase (264 aa).

Aspartate 45 and aspartate 84 together coordinate Mg(2+). 3-methyl-2-oxobutanoate-binding positions include 45–46, aspartate 84, and lysine 112; that span reads DS. Glutamate 114 is a binding site for Mg(2+). Glutamate 181 acts as the Proton acceptor in catalysis.

The protein belongs to the PanB family. As to quaternary structure, homodecamer; pentamer of dimers. Mg(2+) is required as a cofactor.

The protein resides in the cytoplasm. The catalysed reaction is 3-methyl-2-oxobutanoate + (6R)-5,10-methylene-5,6,7,8-tetrahydrofolate + H2O = 2-dehydropantoate + (6S)-5,6,7,8-tetrahydrofolate. Its pathway is cofactor biosynthesis; (R)-pantothenate biosynthesis; (R)-pantoate from 3-methyl-2-oxobutanoate: step 1/2. Functionally, catalyzes the reversible reaction in which hydroxymethyl group from 5,10-methylenetetrahydrofolate is transferred onto alpha-ketoisovalerate to form ketopantoate. This Escherichia coli O157:H7 protein is 3-methyl-2-oxobutanoate hydroxymethyltransferase.